The sequence spans 323 residues: Aquaporin-2 (323 aa).

3 helical membrane-spanning segments follow: residues 32 to 54, 74 to 96, and 103 to 123; these read FLAVFVLMVFTEGCSASAIFTHR, YVAGGVTGAFLNPAIAVAFSVLG, and CFCYMIAQYLGAFLASLAIYA. Residues 85–87 carry the NPA 1 motif; that stretch reads NPA. N-linked (GlcNAc...) asparagine glycosylation occurs at Asn143. The next 2 helical transmembrane spans lie at 161–181 and 193–213; these read GAFVDQVFGTALLIIVVLSMV and FPIAIGLLIVVLDISLAYNAG. The NPA 2 motif lies at 217-219; that stretch reads NPS. Residues 243–263 traverse the membrane as a helical segment; the sequence is YTWFFVPVVGSHAGAIVGAVI. The N-linked (GlcNAc...) asparagine glycan is linked to Asn292.

It belongs to the MIP/aquaporin (TC 1.A.8) family.

It localises to the cell membrane. It catalyses the reaction H2O(in) = H2O(out). The enzyme catalyses glycerol(in) = glycerol(out). Its function is as follows. Aquaglyceroporin that may modulate the water content and osmolytes during anhydrobiosis. This chain is Aquaporin-2, found in Milnesium tardigradum (Water bear).